The primary structure comprises 418 residues: UDP-N-acetylglucosamine 1-carboxyvinyltransferase 2 (418 aa).

K22 to N23 is a binding site for phosphoenolpyruvate. R92 lines the UDP-N-acetyl-alpha-D-glucosamine pocket. Catalysis depends on C116, which acts as the Proton donor. The residue at position 116 (C116) is a 2-(S-cysteinyl)pyruvic acid O-phosphothioketal. UDP-N-acetyl-alpha-D-glucosamine contacts are provided by D305 and I327.

This sequence belongs to the EPSP synthase family. MurA subfamily.

The protein resides in the cytoplasm. The catalysed reaction is phosphoenolpyruvate + UDP-N-acetyl-alpha-D-glucosamine = UDP-N-acetyl-3-O-(1-carboxyvinyl)-alpha-D-glucosamine + phosphate. It participates in cell wall biogenesis; peptidoglycan biosynthesis. Cell wall formation. Adds enolpyruvyl to UDP-N-acetylglucosamine. The sequence is that of UDP-N-acetylglucosamine 1-carboxyvinyltransferase 2 from Mesorhizobium japonicum (strain LMG 29417 / CECT 9101 / MAFF 303099) (Mesorhizobium loti (strain MAFF 303099)).